The following is an 805-amino-acid chain: Kinesin-like protein KIP3 (805 aa).

One can recognise a Kinesin motor domain in the interval 10–438; that stretch reads SIVVAIRVRP…LKYANRAKEI (429 aa). 192–199 serves as a coordination point for ATP; sequence GATGCGKT. Residues 449-481 are a coiled coil; it reads LSRHVGSYLKMITEQKRQIEELREREEKMISLK. The tract at residues 720 to 805 is disordered; that stretch reads NFSQKKVKWT…HQSLLATARK (86 aa). Over residues 764-773 the composition is skewed to polar residues; sequence MQDTTFNEQG. Residues 774-783 are compositionally biased toward low complexity; that stretch reads PSTPSAPTTA. Polar residues predominate over residues 792–805; sequence SLLTHQSLLATARK.

The protein belongs to the TRAFAC class myosin-kinesin ATPase superfamily. Kinesin family. Kinesin II subfamily.

It is found in the cytoplasm. The protein resides in the cytoskeleton. This chain is Kinesin-like protein KIP3 (KIP3), found in Saccharomyces cerevisiae (strain ATCC 204508 / S288c) (Baker's yeast).